A 152-amino-acid polypeptide reads, in one-letter code: Nucleoside diphosphate kinase (152 aa).

Positions 11, 59, 87, 93, 104, and 114 each coordinate ATP. The Pros-phosphohistidine intermediate role is filled by histidine 117.

This sequence belongs to the NDK family. As to quaternary structure, homotetramer. The cofactor is Mg(2+).

It is found in the cytoplasm. It carries out the reaction a 2'-deoxyribonucleoside 5'-diphosphate + ATP = a 2'-deoxyribonucleoside 5'-triphosphate + ADP. It catalyses the reaction a ribonucleoside 5'-diphosphate + ATP = a ribonucleoside 5'-triphosphate + ADP. Its function is as follows. Major role in the synthesis of nucleoside triphosphates other than ATP. The ATP gamma phosphate is transferred to the NDP beta phosphate via a ping-pong mechanism, using a phosphorylated active-site intermediate. The polypeptide is Nucleoside diphosphate kinase (Prochlorococcus marinus (strain MIT 9312)).